A 515-amino-acid polypeptide reads, in one-letter code: 2-isopropylmalate synthase (515 aa).

One can recognise a Pyruvate carboxyltransferase domain in the interval 5–267 (VIIFDTTLRD…RTGINHEEIH (263 aa)). Positions 14, 202, 204, and 238 each coordinate Mn(2+). The segment at 392–515 (KLNYLSVQSG…EMKQKKIATV (124 aa)) is regulatory domain.

The protein belongs to the alpha-IPM synthase/homocitrate synthase family. LeuA type 1 subfamily. In terms of assembly, homodimer. Mn(2+) serves as cofactor.

Its subcellular location is the cytoplasm. It carries out the reaction 3-methyl-2-oxobutanoate + acetyl-CoA + H2O = (2S)-2-isopropylmalate + CoA + H(+). The protein operates within amino-acid biosynthesis; L-leucine biosynthesis; L-leucine from 3-methyl-2-oxobutanoate: step 1/4. In terms of biological role, catalyzes the condensation of the acetyl group of acetyl-CoA with 3-methyl-2-oxobutanoate (2-ketoisovalerate) to form 3-carboxy-3-hydroxy-4-methylpentanoate (2-isopropylmalate). In Vibrio vulnificus (strain CMCP6), this protein is 2-isopropylmalate synthase.